The primary structure comprises 270 residues: Sec-independent protein translocase protein TatC (270 aa).

A run of 6 helical transmembrane segments spans residues 25 to 45 (FIAV…LFDI), 75 to 95 (VSLL…FWMF), 111 to 131 (VVIL…FIVF), 156 to 176 (LGFA…PLVL), 195 to 211 (KYAI…ITPP), and 213 to 233 (VVTQ…SIIG). The tract at residues 243–270 (SDEEEAAENSDVQTDKSTDDTTPGEDQN) is disordered.

Belongs to the TatC family. The Tat system comprises two distinct complexes: a TatABC complex, containing multiple copies of TatA, TatB and TatC subunits, and a separate TatA complex, containing only TatA subunits. Substrates initially bind to the TatABC complex, which probably triggers association of the separate TatA complex to form the active translocon.

It is found in the cell inner membrane. Its function is as follows. Part of the twin-arginine translocation (Tat) system that transports large folded proteins containing a characteristic twin-arginine motif in their signal peptide across membranes. Together with TatB, TatC is part of a receptor directly interacting with Tat signal peptides. This chain is Sec-independent protein translocase protein TatC, found in Desulforapulum autotrophicum (strain ATCC 43914 / DSM 3382 / VKM B-1955 / HRM2) (Desulfobacterium autotrophicum).